The following is a 237-amino-acid chain: Flagellar L-ring protein (237 aa).

A signal peptide spans 1-24 (MNRPGFPRFSVLIASLCGITLLSG). Residue Cys-25 is the site of N-palmitoyl cysteine attachment. Cys-25 carries S-diacylglycerol cysteine lipidation.

It belongs to the FlgH family. In terms of assembly, the basal body constitutes a major portion of the flagellar organelle and consists of four rings (L,P,S, and M) mounted on a central rod.

The protein resides in the cell outer membrane. It localises to the bacterial flagellum basal body. Its function is as follows. Assembles around the rod to form the L-ring and probably protects the motor/basal body from shearing forces during rotation. The protein is Flagellar L-ring protein of Pseudomonas syringae pv. tomato (strain ATCC BAA-871 / DC3000).